The primary structure comprises 3420 residues: Adhesin BmaC autotransporter (3420 aa).

The N-terminal stretch at 1–72 is a signal peptide; it reads MPNLANQDFT…SLVMAGTAAA (72 aa). Residues 3138–3420 enclose the Autotransporter domain; it reads GPSGNNGIWA…AGSVGLRVRW (283 aa).

The protein localises to the cell surface. It localises to the cell outer membrane. In terms of biological role, fibronectin-binding protein, which is involved in adhesion to host cells and in the infective process. Mediates the binding of B.suis to the extracellular matrix and to non-phagocytic cells via cell-associated fibronectin. This is Adhesin BmaC autotransporter from Brucella suis biovar 1 (strain 1330).